The following is a 181-amino-acid chain: MKNLFILALLAFTATSAVAQLYTTCSQGYGQCQQQPQPQPQPQPQPQMNTCSAFLQQCSQTAYVQSQMWQASGCQLMRQQCCQPLAQISEQARCQAVCSVAQIIMRQQQGQRFGQPQQQQGQSFSQPQQQVPVEIMGMVLQTLPSMCSVNIPQYCTTTPCSTIAPAIYNIPMTATCAGGAC.

An N-terminal signal peptide occupies residues 1-19 (MKNLFILALLAFTATSAVA).

The protein belongs to the prolamin family. Contains 7 disulfide bonds.

In terms of biological role, seed storage protein. Not integrated in the gluten polymer through disulfide bonds, unless incorporated by reduction and reoxidation during dough making. Increases dough strength and bread volume, but decreases dough stability when added into a base wheat flour. In Triticum aestivum (Wheat), this protein is Avenin-like a6.